The primary structure comprises 312 residues: 1-(5-phosphoribosyl)-5-[(5-phosphoribosylamino)methylideneamino] imidazole-4-carboxamide isomerase HISN3, chloroplastic (312 aa).

Residues 1–67 constitute a chloroplast transit peptide; the sequence is MRSPASTPSI…IHKGKVKQIV (67 aa). A 1-(5-phospho-beta-D-ribosyl)-5-[(5-phospho-beta-D-ribosylamino)methylideneamino]imidazole-4-carboxamide-binding site is contributed by aspartate 57. Glutamine 65 lines the 5-[(5-phospho-1-deoxy-D-ribulos-1-ylimino)methylamino]-1-(5-phospho-beta-D-ribosyl)imidazole-4-carboxamide pocket. Na(+) contacts are provided by glutamine 65 and isoleucine 66. Glycine 68 lines the 1-(5-phospho-beta-D-ribosyl)-5-[(5-phospho-beta-D-ribosylamino)methylideneamino]imidazole-4-carboxamide pocket. Histidine 108, glycine 138, threonine 158, and serine 159 together coordinate 5-[(5-phospho-1-deoxy-D-ribulos-1-ylimino)methylamino]-1-(5-phospho-beta-D-ribosyl)imidazole-4-carboxamide. 3 residues coordinate 1-(5-phospho-beta-D-ribosyl)-5-[(5-phospho-beta-D-ribosylamino)methylideneamino]imidazole-4-carboxamide: glycine 138, threonine 158, and serine 159. Positions 159 and 162 each coordinate Na(+). Residues aspartate 187, arginine 203, tryptophan 204, and histidine 230 each coordinate 1-(5-phospho-beta-D-ribosyl)-5-[(5-phospho-beta-D-ribosylamino)methylideneamino]imidazole-4-carboxamide. Aspartate 187 contacts 5-[(5-phospho-1-deoxy-D-ribulos-1-ylimino)methylamino]-1-(5-phospho-beta-D-ribosyl)imidazole-4-carboxamide. Tryptophan 204 provides a ligand contact to 5-[(5-phospho-1-deoxy-D-ribulos-1-ylimino)methylamino]-1-(5-phospho-beta-D-ribosyl)imidazole-4-carboxamide. Glutamate 235 lines the Na(+) pocket. 1-(5-phospho-beta-D-ribosyl)-5-[(5-phospho-beta-D-ribosylamino)methylideneamino]imidazole-4-carboxamide contacts are provided by glycine 236, glycine 262, glycine 285, and serine 286. 5-[(5-phospho-1-deoxy-D-ribulos-1-ylimino)methylamino]-1-(5-phospho-beta-D-ribosyl)imidazole-4-carboxamide is bound by residues glycine 236, glycine 262, glycine 285, and serine 286.

It belongs to the HisA/HisF family. Requires Na(+) as cofactor.

Its subcellular location is the plastid. It localises to the chloroplast. The enzyme catalyses 1-(5-phospho-beta-D-ribosyl)-5-[(5-phospho-beta-D-ribosylamino)methylideneamino]imidazole-4-carboxamide = 5-[(5-phospho-1-deoxy-D-ribulos-1-ylimino)methylamino]-1-(5-phospho-beta-D-ribosyl)imidazole-4-carboxamide. The protein operates within amino-acid biosynthesis; L-histidine biosynthesis; L-histidine from 5-phospho-alpha-D-ribose 1-diphosphate: step 4/9. Functionally, component of the histidine biosynthesis pathway that catalyzes the isomerization of 5'-ProFAR (pro-phosphoribosyl formimino-5-aminoimidazole-4-carboxamide ribonucleotide, referred as 1-(5-phospho-beta-D-ribosyl)-5-[(5-phospho-beta-D-ribosylamino)methylideneamino]imidazole-4-carboxamide) to PrFAR (phosphoribulosyl formimino-5-aminoimidazole-4-carboxamide ribonucleotide, referred as 5-[(5-phospho-1-deoxy-D-ribulos-1-ylimino)methylamino]-1-(5-phospho-beta-D-ribosyl)imidazole-4-carboxamide). The sequence is that of 1-(5-phosphoribosyl)-5-[(5-phosphoribosylamino)methylideneamino] imidazole-4-carboxamide isomerase HISN3, chloroplastic from Medicago truncatula (Barrel medic).